A 1153-amino-acid polypeptide reads, in one-letter code: Duffy receptor beta form (1153 aa).

A signal peptide spans 1–21; that stretch reads MEGKKKRPLFFLLVLLLSHKA. Residues 22 to 1085 lie on the Extracellular side of the membrane; that stretch reads NNVLFERMKG…YECFTKGSST (1064 aa). Residues asparagine 134, asparagine 179, and asparagine 202 are each glycosylated (N-linked (GlcNAc...) asparagine). 2 disulfides stabilise this stretch: cysteine 214–cysteine 243 and cysteine 227–cysteine 234. N-linked (GlcNAc...) asparagine glycosylation is found at asparagine 252 and asparagine 348. Disulfide bonds link cysteine 297/cysteine 374, cysteine 412/cysteine 429, cysteine 424/cysteine 504, and cysteine 433/cysteine 502. 2 N-linked (GlcNAc...) asparagine glycosylation sites follow: asparagine 430 and asparagine 467. Disordered stretches follow at residues 520–545, 565–591, 612–631, and 655–981; these read LKSA…GAEK, DEAA…DNIE, RGAT…SYSG, and ENSE…LYSH. Polar residues-rich tracts occupy residues 531–542 and 574–586; these read SHSTIQPMSSSG and NGNQ…NIKG. Asparagine 576 and asparagine 626 each carry an N-linked (GlcNAc...) asparagine glycan. A compositionally biased stretch (basic and acidic residues) spans 661 to 675; it reads LETKHKIFEPSKDNS. Residues 677–733 show a composition bias toward polar residues; that stretch reads NSENSGSMEFKATSSNPITEAVESSSAEGQVQEDSAHRSVNTGRDNSTISAATSDDG. N-linked (GlcNAc...) asparagine glycosylation occurs at asparagine 722. Basic and acidic residues predominate over residues 791-800; the sequence is IDGKNVDIAE. A compositionally biased stretch (polar residues) spans 819 to 834; the sequence is TDNGNVPRSGNKQNEG. Asparagine 847 and asparagine 856 each carry an N-linked (GlcNAc...) asparagine glycan. Positions 867-878 are enriched in basic and acidic residues; sequence GNEKDFQKHDFM. Residues 884–942 show a composition bias toward low complexity; that stretch reads NDQTSSDQTSSDQTSSNQTSSDQTSSNQTSSDQTSSDQISSDQTSSDQTSSNQTSSDQT. Asparagine 900, asparagine 910, and asparagine 935 each carry an N-linked (GlcNAc...) asparagine glycan. The span at 945–969 shows a compositional bias: basic and acidic residues; sequence TEEHHRDNVRNPEIKSSEDMSKGDF. Over residues 971–981 the composition is skewed to polar residues; sequence RNSNSNELYSH. The chain crosses the membrane as a helical span at residues 1086–1106; sequence GIGIVYFATGGAFLIILLLFV. Over 1107–1153 the chain is Cytoplasmic; the sequence is SKNVASNDYEEEATFDEFVEYSDDIHRTPLMPNHIEHMQQFTPLDYS.

Its subcellular location is the membrane. In terms of biological role, binds to Neu5Gc-sialylated receptors on macaque erythrocytes. This Plasmodium knowlesi protein is Duffy receptor beta form.